A 505-amino-acid chain; its full sequence is Lysine--tRNA ligase (505 aa).

Mg(2+)-binding residues include Glu415 and Glu422.

It belongs to the class-II aminoacyl-tRNA synthetase family. In terms of assembly, homodimer. Mg(2+) serves as cofactor.

The protein resides in the cytoplasm. The catalysed reaction is tRNA(Lys) + L-lysine + ATP = L-lysyl-tRNA(Lys) + AMP + diphosphate. The chain is Lysine--tRNA ligase from Xanthomonas axonopodis pv. citri (strain 306).